We begin with the raw amino-acid sequence, 388 residues long: MNLHEYQAKSLFAEYGLPVSEGFACDTAQEAVEAAGRIGGNLWVVKCQVHAGGRGKAGGVKVTGDKEEIRAFAEHWLGKNLVTYQTDEKGQPVAKILVESCTDIANELYLGAVVDRSTRRVVFMASTEGGVEIEKVAEETPELIHKAIIDPLTGPQPYQARDLGFKLGLNPTQMKQFTKIFMGLATMFVDHDFALLEINPLVITTEGNLHCLDGKIGIDGNALFRQPKVKAMHDPSQDDAREAHAAMFELNYVALDGNVGCMVNGAGLAMGTMDIVNLHGGKPANFLDVGGGATKERVAEAFKIILSDSNVKAVLVNIFGGIVRCDMIAEGIIGAVKEVGVKVPVVVRLEGTNAELGREVLAKSGLDIIAATSLTDAAERVVKAAEGK.

Positions 9–244 (KSLFAEYGLP…PSQDDAREAH (236 aa)) constitute an ATP-grasp domain. ATP contacts are provided by residues Lys46, 53 to 55 (GRG), Glu99, Thr102, and Glu107. Residues Asn199 and Asp213 each coordinate Mg(2+). Substrate contacts are provided by residues Asn264 and 321 to 323 (GIV).

It belongs to the succinate/malate CoA ligase beta subunit family. As to quaternary structure, heterotetramer of two alpha and two beta subunits. Requires Mg(2+) as cofactor.

It carries out the reaction succinate + ATP + CoA = succinyl-CoA + ADP + phosphate. It catalyses the reaction GTP + succinate + CoA = succinyl-CoA + GDP + phosphate. It participates in carbohydrate metabolism; tricarboxylic acid cycle; succinate from succinyl-CoA (ligase route): step 1/1. Functionally, succinyl-CoA synthetase functions in the citric acid cycle (TCA), coupling the hydrolysis of succinyl-CoA to the synthesis of either ATP or GTP and thus represents the only step of substrate-level phosphorylation in the TCA. The beta subunit provides nucleotide specificity of the enzyme and binds the substrate succinate, while the binding sites for coenzyme A and phosphate are found in the alpha subunit. This chain is Succinate--CoA ligase [ADP-forming] subunit beta, found in Shewanella putrefaciens (strain CN-32 / ATCC BAA-453).